The following is a 311-amino-acid chain: T-cell immunomodulatory protein (311 aa).

3 N-linked (GlcNAc...) asparagine glycosylation sites follow: Asn-52, Asn-70, and Asn-181. A helical transmembrane segment spans residues 266-286 (VLLTAIALIGVCVFILAIIGI).

This sequence belongs to the TIP family. Interacts with RUVBL1, RUVBL2 and alpha-tubulin.

Its subcellular location is the secreted. The protein resides in the cell membrane. Functionally, modulator of T-cell function. Has a protective effect in graft versus host disease model. The polypeptide is T-cell immunomodulatory protein (Macaca fascicularis (Crab-eating macaque)).